The following is a 590-amino-acid chain: RNA-binding protein 47 (590 aa).

Polar residues predominate over residues 1 to 21; sequence MTAEDSTTAMNSDPTVGSSTK. The segment at 1–26 is disordered; sequence MTAEDSTTAMNSDPTVGSSTKVPEGV. 3 consecutive RRM domains span residues 71 to 149, 151 to 233, and 246 to 318; these read CEVF…CSVD, CRLF…WAEP, and KILY…LAKP. Asymmetric dimethylarginine; alternate is present on residues R396 and R407. R396 and R407 each carry omega-N-methylarginine; alternate.

Belongs to the RRM RBM47 family. In terms of assembly, homodimer. Interacts with A1CF. Interacts with APOBEC1; form an mRNA editing complex. Interacts with RBPMS.

The protein resides in the nucleus. It localises to the cytoplasm. Single-stranded RNA-binding protein that functions in a variety of RNA processes, including alternative splicing, RNA stabilization, and RNA editing. Functions as an enzyme-substrate adapter for the cytidine deaminase APOBEC1. With APOBEC1 forms an mRNA editing complex involved into cytidine to uridine editing of a variety of mRNA molecules. Through the binding of their 3'UTR, also stabilizes a variety of mRNAs and regulates the expression of genes such as the interferon alpha/beta receptor and interleukin-10. Also involved in the alternative splicing of several genes including TJP1. Binds the pre-mRNA (U)GCAUG consensus sequences in downstream intronic regions of alternative exons regulating their exclusion and inclusion into mRNAs. Independently of its RNA-binding activity, could negatively regulate MAVS by promoting its lysosomal degradation. The polypeptide is RNA-binding protein 47 (Rattus norvegicus (Rat)).